Reading from the N-terminus, the 437-residue chain is Adenylosuccinate synthetase 1 (437 aa).

GTP-binding positions include 13–19 and 41–43; these read GDEGKGK and GHT. D14 serves as the catalytic Proton acceptor. Residues D14 and G41 each coordinate Mg(2+). IMP-binding positions include 14 to 17, 39 to 42, T130, R144, Q225, T240, and R310; these read DEGK and NAGH. H42 acts as the Proton donor in catalysis. 306–312 provides a ligand contact to substrate; the sequence is ATTGRLR. Residues R312, 338 to 340, and 421 to 423 each bind GTP; these read KLD and STG.

Belongs to the adenylosuccinate synthetase family. As to quaternary structure, homodimer. Mg(2+) is required as a cofactor.

It is found in the cytoplasm. The enzyme catalyses IMP + L-aspartate + GTP = N(6)-(1,2-dicarboxyethyl)-AMP + GDP + phosphate + 2 H(+). The protein operates within purine metabolism; AMP biosynthesis via de novo pathway; AMP from IMP: step 1/2. In terms of biological role, plays an important role in the de novo pathway of purine nucleotide biosynthesis. Catalyzes the first committed step in the biosynthesis of AMP from IMP. In Pseudoalteromonas translucida (strain TAC 125), this protein is Adenylosuccinate synthetase 1.